The sequence spans 233 residues: 5'-methylthioadenosine/S-adenosylhomocysteine nucleosidase (233 aa).

Catalysis depends on Glu12, which acts as the Proton acceptor. Residues Gly78, Ile152, and Met173–Glu174 contribute to the substrate site. Asp197 (proton donor) is an active-site residue.

The protein belongs to the PNP/UDP phosphorylase family. MtnN subfamily. In terms of assembly, homodimer.

It catalyses the reaction S-adenosyl-L-homocysteine + H2O = S-(5-deoxy-D-ribos-5-yl)-L-homocysteine + adenine. The enzyme catalyses S-methyl-5'-thioadenosine + H2O = 5-(methylsulfanyl)-D-ribose + adenine. It carries out the reaction 5'-deoxyadenosine + H2O = 5-deoxy-D-ribose + adenine. Its pathway is amino-acid biosynthesis; L-methionine biosynthesis via salvage pathway; S-methyl-5-thio-alpha-D-ribose 1-phosphate from S-methyl-5'-thioadenosine (hydrolase route): step 1/2. Its function is as follows. Catalyzes the irreversible cleavage of the glycosidic bond in both 5'-methylthioadenosine (MTA) and S-adenosylhomocysteine (SAH/AdoHcy) to adenine and the corresponding thioribose, 5'-methylthioribose and S-ribosylhomocysteine, respectively. Also cleaves 5'-deoxyadenosine, a toxic by-product of radical S-adenosylmethionine (SAM) enzymes, into 5-deoxyribose and adenine. Thus, is required for in vivo function of the radical SAM enzymes biotin synthase and lipoic acid synthase, that are inhibited by 5'-deoxyadenosine accumulation. This Yersinia pestis bv. Antiqua (strain Angola) protein is 5'-methylthioadenosine/S-adenosylhomocysteine nucleosidase.